Reading from the N-terminus, the 1174-residue chain is DNA polymerase III subunit alpha (1174 aa).

Belongs to the DNA polymerase type-C family. DnaE subfamily. As to quaternary structure, DNA polymerase III contains a core (composed of alpha, epsilon and theta chains) that associates with a tau subunit. This core dimerizes to form the PolIII' complex. PolIII' associates with the gamma complex (composed of gamma, delta, delta', psi and chi chains) and with the beta chain to form the complete DNA polymerase III complex.

Its subcellular location is the cytoplasm. The enzyme catalyses DNA(n) + a 2'-deoxyribonucleoside 5'-triphosphate = DNA(n+1) + diphosphate. In terms of biological role, DNA polymerase III is a complex, multichain enzyme responsible for most of the replicative synthesis in bacteria. This DNA polymerase also exhibits 3' to 5' exonuclease activity. The alpha chain is the DNA polymerase. This Yersinia pestis protein is DNA polymerase III subunit alpha (dnaE).